Reading from the N-terminus, the 1134-residue chain is MMGKPNSTPAKTQKSISSFFAPKSSQKPQDSSSPPASKAPGNLDDADSNEGTNEDAKITGNRLKRVLEEDENGGNTGAKERPSKRAKSVEVEEEDNESYALPAADSRKTSSSLTRGKSKPSLRTNKYMFSGSSQRATESLIEEEPEDELEKARKVELHKKFVKKLGHPDSLRRIIHEDDAALEVGDEEGEEDEEAPAPVKTKKKGAKTGKLTPMELQVIDIKRKHMDTLLIVEVGYKFKFFGEDARTAAKVLSIVCIPGKFRFDEHPSESHLNYFASASIPVHRLPVHAKRLVAAGYKIGIVRQTETAALKKAGDNRNAPFVRKLTNVYTKGTYIDDIDGLDTTDAPSGGAPATGYLLCITETKAKGWGTDEKVEVGILAVQPATGDVIYDNFEDGFMRGELETRLLHIAPCELLIVGELTKATDKLVQHLSGSSTNVFGDRIRVERVGKSKTMAAESYSRVAQFYADKLKAHQSSNNAREQELLEKVLKLTEPVTICLSAMITHMTEYGLEHVFDLTKYFQSFSARSHMLLNGNTLTSLEIYTNQTDYTQKGSLFWTLDKTQTKFGQRLLRKWVGRPLLDKQRLEERVAAVEELKDNANTPKVDKLNATLREVRSDLERSLLRIYYGKCTRPELLTVLQTMQRIANEFAHVKTPSDAGFESIALNEAVASLPAIGEIVISFLDKINAQAARNDDKYAFFLEHYETEAIGDHKCGIGAVEQDLEAHRMVAATKLSKKTPVTYVTIAGIEYLIEVPNTDLKNVPASWAKISGTKKMSRFHTPEVIKFLRERDQHKESLSSACDAAFSTFLSEISTHYALIRDTISHLATLDCLLSLATVASLPGYCKPTFTSSTEISVIGGRHPMVEQLLPSAYIPNDTSLSTSPDHTRALLLTGPNMGGKSSYVRQVALISILAQIGSYVPAESARLGLLDGIYTRMGAYDSLFTAQSTFMVELSETASILKSAGPRSLVILDELGRGTSTHDGVAIAEAVLDWVVRETKCLCLFITHYQTLASVARGFEKGKELRNVHMKFTAERNGRRVSNADADKDNEDFDEEITFLYEVGEGVAHRSYGLNVARLARVPKSVLDTAASKSRELETQVKQKKLLGLSNMISNVLENGTDQLDQLIIGMEQL.

Residues Met-1 to Ser-18 show a composition bias toward polar residues. 2 disordered regions span residues Met-1–Pro-145 and Glu-183–Lys-207. The segment covering Ala-21–Pro-40 has biased composition (low complexity). The segment covering Ala-78–Glu-90 has biased composition (basic and acidic residues). A compositionally biased stretch (acidic residues) spans Glu-183–Ala-195. The mispair-binding domain stretch occupies residues Thr-208–Gly-332. Gly-894 to Ser-901 serves as a coordination point for ATP.

The protein belongs to the DNA mismatch repair MutS family. MSH3 subfamily. In terms of assembly, heterodimer consisting of msh2-msh3 (MutS beta). Forms a ternary complex with MutL alpha (mlh1-pms1).

Its subcellular location is the nucleus. Functionally, component of the post-replicative DNA mismatch repair system (MMR). Heterodimerizes with msh2 to form MutS beta, which binds to DNA mismatches thereby initiating DNA repair. Msh3 provides substrate-binding and substrate specificity to the complex. When bound, the MutS beta heterodimer bends the DNA helix and shields approximately 20 base pairs. Acts mainly to repair insertion-deletion loops (IDLs) from 2 to 13 nucleotides in size, but can also repair base-base and single insertion-deletion mismatches that occur during replication. After mismatch binding, forms a ternary complex with the MutL alpha heterodimer, which is thought to be responsible for directing the downstream MMR events, including strand discrimination, excision, and resynthesis. ATP binding and hydrolysis play a pivotal role in mismatch repair functions. This chain is DNA mismatch repair protein msh3 (msh3), found in Botryotinia fuckeliana (strain B05.10) (Noble rot fungus).